The primary structure comprises 324 residues: tRNA-modifying protein YgfZ (324 aa).

Residue Trp184 coordinates folate.

This sequence belongs to the tRNA-modifying YgfZ family.

The protein localises to the cytoplasm. In terms of biological role, folate-binding protein involved in regulating the level of ATP-DnaA and in the modification of some tRNAs. It is probably a key factor in regulatory networks that act via tRNA modification, such as initiation of chromosomal replication. This chain is tRNA-modifying protein YgfZ, found in Vibrio vulnificus (strain YJ016).